The primary structure comprises 329 residues: DNA-directed RNA polymerase subunit alpha (329 aa).

The tract at residues 1–235 is alpha N-terminal domain (alpha-NTD); the sequence is MQGSVTEFLK…EQLDAFVDLR (235 aa). Residues 249-329 are alpha C-terminal domain (alpha-CTD); that stretch reads FDPILLRPVD…NWPPASIAED (81 aa).

This sequence belongs to the RNA polymerase alpha chain family. Homodimer. The RNAP catalytic core consists of 2 alpha, 1 beta, 1 beta' and 1 omega subunit. When a sigma factor is associated with the core the holoenzyme is formed, which can initiate transcription.

The catalysed reaction is RNA(n) + a ribonucleoside 5'-triphosphate = RNA(n+1) + diphosphate. In terms of biological role, DNA-dependent RNA polymerase catalyzes the transcription of DNA into RNA using the four ribonucleoside triphosphates as substrates. The chain is DNA-directed RNA polymerase subunit alpha from Actinobacillus pleuropneumoniae serotype 5b (strain L20).